A 315-amino-acid chain; its full sequence is Homoserine kinase (315 aa).

Position 96-106 (Pro96–Ala106) interacts with ATP.

It belongs to the GHMP kinase family. Homoserine kinase subfamily.

Its subcellular location is the cytoplasm. It catalyses the reaction L-homoserine + ATP = O-phospho-L-homoserine + ADP + H(+). It participates in amino-acid biosynthesis; L-threonine biosynthesis; L-threonine from L-aspartate: step 4/5. Its function is as follows. Catalyzes the ATP-dependent phosphorylation of L-homoserine to L-homoserine phosphate. The sequence is that of Homoserine kinase from Mycolicibacterium paratuberculosis (strain ATCC BAA-968 / K-10) (Mycobacterium paratuberculosis).